Here is a 146-residue protein sequence, read N- to C-terminus: D-aminoacyl-tRNA deacylase (146 aa).

The short motif at 137–138 (GP) is the Gly-cisPro motif, important for rejection of L-amino acids element.

This sequence belongs to the DTD family. In terms of assembly, homodimer.

It is found in the cytoplasm. It carries out the reaction glycyl-tRNA(Ala) + H2O = tRNA(Ala) + glycine + H(+). The enzyme catalyses a D-aminoacyl-tRNA + H2O = a tRNA + a D-alpha-amino acid + H(+). Functionally, an aminoacyl-tRNA editing enzyme that deacylates mischarged D-aminoacyl-tRNAs. Also deacylates mischarged glycyl-tRNA(Ala), protecting cells against glycine mischarging by AlaRS. Acts via tRNA-based rather than protein-based catalysis; rejects L-amino acids rather than detecting D-amino acids in the active site. By recycling D-aminoacyl-tRNA to D-amino acids and free tRNA molecules, this enzyme counteracts the toxicity associated with the formation of D-aminoacyl-tRNA entities in vivo and helps enforce protein L-homochirality. The sequence is that of D-aminoacyl-tRNA deacylase from Bacillus mycoides (strain KBAB4) (Bacillus weihenstephanensis).